The following is a 162-amino-acid chain: Precursor protein UG (162 aa).

The N-terminal stretch at 1–19 is a signal peptide; that stretch reads MERILLCFIVATLVAISMA. Residues 20–23 constitute a propeptide that is removed on maturation; sequence NPRP. Disulfide bonds link Cys-30–Cys-42 and Cys-33–Cys-49. A propeptide spanning residues 56–59 is cleaved from the precursor; it reads VPKP. Intrachain disulfides connect Cys-66/Cys-78 and Cys-69/Cys-85. Positions 92-95 are excised as a propeptide; the sequence is VPKP. Intrachain disulfides connect Cys-102/Cys-114 and Cys-105/Cys-121. Positions 128–131 are excised as a propeptide; it reads VPKP. Intrachain disulfides connect Cys-138-Cys-150 and Cys-141-Cys-157.

Belongs to the sea anemone BBH family.

The protein resides in the secreted. It is found in the nematocyst. Affects the ASIC3 channel (ACCN3) and produces analgesic effects. It produces a reversible inhibition effect on both the transient and the sustained current of human ASIC3 channels expressed in X.laevis oocytes. It completely blocks the transient component (IC(50)=10 uM) and partially (48%) inhibits the amplitude of the sustained component (IC(50)=1.44 uM). Using in vivo tests in mice, it reverses inflammatory and acid-induced pain. Its function is as follows. Does not affect the ASIC3 channel. Does not cause lethality or paralysis of noble crayfish (A.astacus) at a dose of 1 mg/kg. In Urticina grebelnyi (Painted anemone), this protein is Precursor protein UG.